Here is a 339-residue protein sequence, read N- to C-terminus: Probable cytosolic iron-sulfur protein assembly protein CIAO1 (339 aa).

WD repeat units lie at residues 14–53, 59–98, 103–142, 148–187, 192–231, 250–289, and 301–339; these read HPDS…WICK, GHQR…FECV, GHEN…EYEC, SHTQ…WVCC, GHES…NEQG, FHTR…DPQQ, and AHSQ…PAGL. An LYR motif; required for interaction with HSC20 motif is present at residues 176-178; that stretch reads LYQ.

The protein belongs to the WD repeat CIA1 family. In terms of assembly, component of the CIA complex. Interacts with CIAO2A and forms a complex with CIAO2B and MMS19; the interactions with CIAO2A and CIAO2B are mutually exclusive. Interacts with CHD1L, ERCC2, IREB2 and POLD1. Component of the MMXD complex, which includes CIAO1, ERCC2, CIAO2B, MMS19 and SLC25A5. Interacts with WT1. Interacts with CIAO3. Interacts (via LYR motif) with HSC20.

The protein resides in the cytoplasm. In terms of biological role, key component of the cytosolic iron-sulfur protein assembly (CIA) complex, a multiprotein complex that mediates the incorporation of iron-sulfur cluster into extramitochondrial Fe/S proteins. As a CIA complex component, interacts specifically with CIAO2A or CIAO2B and MMS19 to assist different branches of iron-sulfur protein assembly, depending of its interactors. The complex CIAO1:CIAO2B:MMS19 binds to and facilitates the assembly of most cytosolic-nuclear Fe/S proteins. CIAO1:CIAO2A specifically matures ACO1 and stabilizes IREB2. Seems to specifically modulate the transactivation activity of WT1. As part of the mitotic spindle-associated MMXD complex it may play a role in chromosome segregation. This Mus musculus (Mouse) protein is Probable cytosolic iron-sulfur protein assembly protein CIAO1.